An 82-amino-acid chain; its full sequence is MREGIHPAYAPVVFRDRAANHAFLTRSTMTSEKTVEWTDGHTYPVVDVEISNVSHPFYTGTARVLDTAGRVERFERRYGKGS.

This sequence belongs to the bacterial ribosomal protein bL31 family. Type B subfamily. In terms of assembly, part of the 50S ribosomal subunit.

The protein is Large ribosomal subunit protein bL31B-2 of Streptomyces avermitilis (strain ATCC 31267 / DSM 46492 / JCM 5070 / NBRC 14893 / NCIMB 12804 / NRRL 8165 / MA-4680).